A 407-amino-acid polypeptide reads, in one-letter code: [Pyruvate dehydrogenase (acetyl-transferring)] kinase isozyme 2, mitochondrial (407 aa).

In terms of domain architecture, Histidine kinase spans 135 to 364; sequence LEYKDTYGDD…DAVIYLKALS (230 aa). Tyr215 and Tyr216 each carry phosphotyrosine. ATP contacts are provided by residues 251-258, Asp290, 309-310, and 325-330; these read ELFKNAMR, ST, and GFGYGL. Lys376 is subject to N6-succinyllysine.

The protein belongs to the PDK/BCKDK protein kinase family. As to quaternary structure, homodimer, and heterodimer with PDK1. Interacts with the pyruvate dehydrogenase complex subunit DLAT, and is part of the multimeric pyruvate dehydrogenase complex that contains multiple copies of pyruvate dehydrogenase (E1), dihydrolipoamide acetyltransferase (DLAT, E2) and lipoamide dehydrogenase (DLD, E3). In terms of tissue distribution, detected in heart (at protein level).

Its subcellular location is the mitochondrion matrix. The enzyme catalyses L-seryl-[pyruvate dehydrogenase E1 alpha subunit] + ATP = O-phospho-L-seryl-[pyruvate dehydrogenase E1 alpha subunit] + ADP + H(+). Kinase that plays a key role in the regulation of glucose and fatty acid metabolism and homeostasis via phosphorylation of the pyruvate dehydrogenase subunits PDHA1 and PDHA2. This inhibits pyruvate dehydrogenase activity, and thereby regulates metabolite flux through the tricarboxylic acid cycle, down-regulates aerobic respiration and inhibits the formation of acetyl-coenzyme A from pyruvate. Inhibition of pyruvate dehydrogenase decreases glucose utilization and increases fat metabolism. Mediates cellular responses to insulin. Plays an important role in maintaining normal blood glucose levels and in metabolic adaptation to nutrient availability. Via its regulation of pyruvate dehydrogenase activity, plays an important role in maintaining normal blood pH and in preventing the accumulation of ketone bodies under starvation. Plays a role in the regulation of cell proliferation and in resistance to apoptosis under oxidative stress. Plays a role in p53/TP53-mediated apoptosis. The protein is [Pyruvate dehydrogenase (acetyl-transferring)] kinase isozyme 2, mitochondrial (Pdk2) of Mus musculus (Mouse).